The sequence spans 443 residues: Xaa-Pro dipeptidase (443 aa).

Residues Asp246, Asp257, His339, Glu384, and Glu423 each coordinate Mn(2+).

It belongs to the peptidase M24B family. Bacterial-type prolidase subfamily. Requires Mn(2+) as cofactor.

The catalysed reaction is Xaa-L-Pro dipeptide + H2O = an L-alpha-amino acid + L-proline. Splits dipeptides with a prolyl residue in the C-terminal position. In Pectobacterium atrosepticum (strain SCRI 1043 / ATCC BAA-672) (Erwinia carotovora subsp. atroseptica), this protein is Xaa-Pro dipeptidase.